A 330-amino-acid polypeptide reads, in one-letter code: Type II restriction enzyme Cfr9I (330 aa).

The protein belongs to the XcyI type II restriction endonuclease family. Requires Mg(2+) as cofactor.

It carries out the reaction Endonucleolytic cleavage of DNA to give specific double-stranded fragments with terminal 5'-phosphates.. An E and P subtype restriction enzyme that recognizes the double-stranded sequence 5'-CCCGGG-3' and cleaves after C-1. The polypeptide is Type II restriction enzyme Cfr9I (cfr9IR) (Citrobacter freundii).